Consider the following 654-residue polypeptide: tRNA 5-methylaminomethyl-2-thiouridine biosynthesis bifunctional protein MnmC (654 aa).

The tRNA (mnm(5)s(2)U34)-methyltransferase stretch occupies residues 1–235 (MSDFQHAQLD…KREMLGGTYQ (235 aa)). The interval 261-654 (VGGGLAGCAS…LRDLVRGQRG (394 aa)) is FAD-dependent cmnm(5)s(2)U34 oxidoreductase.

In the N-terminal section; belongs to the methyltransferase superfamily. tRNA (mnm(5)s(2)U34)-methyltransferase family. This sequence in the C-terminal section; belongs to the DAO family. The cofactor is FAD.

The protein localises to the cytoplasm. The enzyme catalyses 5-aminomethyl-2-thiouridine(34) in tRNA + S-adenosyl-L-methionine = 5-methylaminomethyl-2-thiouridine(34) in tRNA + S-adenosyl-L-homocysteine + H(+). Its function is as follows. Catalyzes the last two steps in the biosynthesis of 5-methylaminomethyl-2-thiouridine (mnm(5)s(2)U) at the wobble position (U34) in tRNA. Catalyzes the FAD-dependent demodification of cmnm(5)s(2)U34 to nm(5)s(2)U34, followed by the transfer of a methyl group from S-adenosyl-L-methionine to nm(5)s(2)U34, to form mnm(5)s(2)U34. In Pseudomonas aeruginosa (strain UCBPP-PA14), this protein is tRNA 5-methylaminomethyl-2-thiouridine biosynthesis bifunctional protein MnmC.